The following is a 660-amino-acid chain: RalBP1-associated Eps domain-containing protein 2 (660 aa).

The EH 1 domain occupies 34-147; the sequence is EQQCYSELFA…RFMMSKNDGE (114 aa). The tract at residues 169–208 is disordered; that stretch reads EKNSFKRMDDEDKQQETQSPTMSPLASPPSSPPHYQRVPL. Position 254 is a phosphoserine (serine 254). One can recognise an EH 2 domain in the interval 282–373; that stretch reads QREYYVNQFR…LQPEYLQAAF (92 aa). The region spanning 315–350 is the EF-hand domain; the sequence is LSIPELSYIWELSDADCDGALTLPEFCAAFHLIVAR. Positions 328, 330, 332, and 339 each coordinate Ca(2+). The segment at 433–616 is disordered; it reads NEALPKDVSE…KQKKAIQTAI (184 aa). Position 479 is a phosphothreonine (threonine 479). A Phosphoserine modification is found at serine 493. Over residues 512-523 the composition is skewed to pro residues; sequence LPPPPALPPRPC. The interaction with RALBP1 stretch occupies residues 514–660; that stretch reads PPPALPPRPC…LEQLRPVTVL (147 aa). The segment at 561 to 660 is interaction with ASAP1; it reads PPSKPIRRKF…LEQLRPVTVL (100 aa). Over residues 582 to 594 the composition is skewed to low complexity; it reads PSTAASGPASAAT. The stretch at 601–657 forms a coiled coil; sequence VQKQSSKQKKAIQTAIRKNKEANAVLARLNSELQQQLKEVHQERIALENQLEQLRPV.

Interacts with EPN1; the interaction is direct. Interacts with EPS15; the interaction is direct. Interacts with EPS15L1. Interacts with RALBP1; can form a ternary complex with activated Ral (RALA or RALB). Interacts with ASAP1; the interaction is direct and this complex can bind paxillin. Also forms a ternary complex with RALBP1 and ASAP1. Interacts with GRB2. In terms of processing, tyrosine-phosphorylated upon stimulation of cells with EGF. Phosphorylation on Tyr-residues induces its association with the EGF receptor probably indirectly through an adapter like GRB2. As to expression, expressed at high levels in the cerebrum, cerebellum, lung, kidney, and testis. Weakly expressed in the kidney. Isoform 2 is down-regulated during progression of prostate cancer.

It is found in the cytoplasm. In terms of biological role, involved in ligand-dependent receptor mediated endocytosis of the EGF and insulin receptors as part of the Ral signaling pathway. By controlling growth factor receptors endocytosis may regulate cell survival. Through ASAP1 may regulate cell adhesion and migration. The chain is RalBP1-associated Eps domain-containing protein 2 (REPS2) from Homo sapiens (Human).